Here is a 250-residue protein sequence, read N- to C-terminus: Probable transcriptional regulatory protein Lferr_0060 (250 aa).

It belongs to the TACO1 family.

The protein resides in the cytoplasm. The sequence is that of Probable transcriptional regulatory protein Lferr_0060 from Acidithiobacillus ferrooxidans (strain ATCC 53993 / BNL-5-31) (Leptospirillum ferrooxidans (ATCC 53993)).